Reading from the N-terminus, the 266-residue chain is Thymidylate synthase (266 aa).

DUMP contacts are provided by residues arginine 21 and 127-128; that span reads RR. The active-site Nucleophile is cysteine 147. DUMP-binding positions include 168 to 171, asparagine 179, and 209 to 211; these read RSAD and HIY. Aspartate 171 serves as a coordination point for (6R)-5,10-methylene-5,6,7,8-tetrahydrofolate. Alanine 265 provides a ligand contact to (6R)-5,10-methylene-5,6,7,8-tetrahydrofolate.

It belongs to the thymidylate synthase family. Bacterial-type ThyA subfamily. Homodimer.

Its subcellular location is the cytoplasm. It catalyses the reaction dUMP + (6R)-5,10-methylene-5,6,7,8-tetrahydrofolate = 7,8-dihydrofolate + dTMP. It functions in the pathway pyrimidine metabolism; dTTP biosynthesis. In terms of biological role, catalyzes the reductive methylation of 2'-deoxyuridine-5'-monophosphate (dUMP) to 2'-deoxythymidine-5'-monophosphate (dTMP) while utilizing 5,10-methylenetetrahydrofolate (mTHF) as the methyl donor and reductant in the reaction, yielding dihydrofolate (DHF) as a by-product. This enzymatic reaction provides an intracellular de novo source of dTMP, an essential precursor for DNA biosynthesis. This chain is Thymidylate synthase, found in Brachyspira hyodysenteriae (strain ATCC 49526 / WA1).